The following is a 543-amino-acid chain: Chaperonin GroEL 2 (543 aa).

Residues Thr29 to Pro32, Asp86 to Thr90, Gly413, Asn479 to Ala481, and Asp495 each bind ATP.

This sequence belongs to the chaperonin (HSP60) family. Forms a cylinder of 14 subunits composed of two heptameric rings stacked back-to-back. Interacts with the co-chaperonin GroES.

The protein localises to the cytoplasm. The enzyme catalyses ATP + H2O + a folded polypeptide = ADP + phosphate + an unfolded polypeptide.. Functionally, together with its co-chaperonin GroES, plays an essential role in assisting protein folding. The GroEL-GroES system forms a nano-cage that allows encapsulation of the non-native substrate proteins and provides a physical environment optimized to promote and accelerate protein folding. In Prochlorococcus marinus (strain NATL1A), this protein is Chaperonin GroEL 2.